The chain runs to 353 residues: UDP-3-O-acylglucosamine N-acyltransferase (353 aa).

Residue His258 is the Proton acceptor of the active site.

The protein belongs to the transferase hexapeptide repeat family. LpxD subfamily. In terms of assembly, homotrimer.

It catalyses the reaction a UDP-3-O-[(3R)-3-hydroxyacyl]-alpha-D-glucosamine + a (3R)-hydroxyacyl-[ACP] = a UDP-2-N,3-O-bis[(3R)-3-hydroxyacyl]-alpha-D-glucosamine + holo-[ACP] + H(+). It functions in the pathway bacterial outer membrane biogenesis; LPS lipid A biosynthesis. Its function is as follows. Catalyzes the N-acylation of UDP-3-O-acylglucosamine using 3-hydroxyacyl-ACP as the acyl donor. Is involved in the biosynthesis of lipid A, a phosphorylated glycolipid that anchors the lipopolysaccharide to the outer membrane of the cell. The sequence is that of UDP-3-O-acylglucosamine N-acyltransferase from Parvibaculum lavamentivorans (strain DS-1 / DSM 13023 / NCIMB 13966).